We begin with the raw amino-acid sequence, 315 residues long: 2-oxoglutarate and iron-dependent oxygenase domain-containing protein 3 (315 aa).

Residues 1–32 form a disordered region; the sequence is MAPQRRGPPRVPEGNSAAERRHANSTKKDRLP. Residues 1–41 are Cytoplasmic-facing; it reads MAPQRRGPPRVPEGNSAAERRHANSTKKDRLPQEAQRTWLR. Residues 18–32 show a composition bias toward basic and acidic residues; the sequence is AERRHANSTKKDRLP. Residues 42-62 form a helical; Signal-anchor for type II membrane protein membrane-spanning segment; the sequence is IVALGVSLALVTFLLWSSAGI. Topologically, residues 63–315 are lumenal; the sequence is DDDVAEVVAH…DHGIEDPVLT (253 aa). A Fe2OG dioxygenase domain is found at 203 to 305; sequence KPTFFSRINS…AITIAFTCNP (103 aa). A glycan (N-linked (GlcNAc...) asparagine) is linked at Asn211. Fe cation-binding residues include His226 and Asp228. N-linked (GlcNAc...) asparagine glycosylation is present at Asn263. His284 lines the Fe cation pocket. Arg294 is an active-site residue. Arg294 contacts 2-oxoglutarate.

This sequence belongs to the OGFOD3 family. Fe(2+) serves as cofactor. It depends on L-ascorbate as a cofactor.

It localises to the membrane. In Rattus norvegicus (Rat), this protein is 2-oxoglutarate and iron-dependent oxygenase domain-containing protein 3 (Ogfod3).